The following is a 664-amino-acid chain: DNA mismatch repair protein MutL (664 aa).

The disordered stretch occupies residues 382–447; it reads RKAGQEQQLQ…YGEPAPSKQQ (66 aa). Over residues 427–436 the composition is skewed to polar residues; the sequence is RHTTSSNQSE.

Belongs to the DNA mismatch repair MutL/HexB family.

Functionally, this protein is involved in the repair of mismatches in DNA. It is required for dam-dependent methyl-directed DNA mismatch repair. May act as a 'molecular matchmaker', a protein that promotes the formation of a stable complex between two or more DNA-binding proteins in an ATP-dependent manner without itself being part of a final effector complex. This chain is DNA mismatch repair protein MutL, found in Vibrio vulnificus (strain CMCP6).